The primary structure comprises 297 residues: uncharacterized protein (297 aa).

Belongs to the metallo-dependent hydrolases superfamily.

This is an uncharacterized protein from Sinorhizobium fredii (strain NBRC 101917 / NGR234).